Reading from the N-terminus, the 222-residue chain is MAKLILATFAVVFLALAATSLAGDPDMLQDVCVADYKSLRGPLRLNGIPCKRLENVTANDFFFDGLTNAGNTTNAVGSLVTAASVERLPGLNTMGVSMARIDYAPWGLSPPHTHPRATEIMFVAEGTLDVGFVTTANKLFTRTVSKGEVFVFPRGLVHFQRNSGNTSALAIAAFNSQLPGTQSIADTLFGAAPPLPSDTLARAFQVDGGMVESIKSKFPPKY.

Positions 1-22 (MAKLILATFAVVFLALAATSLA) are cleaved as a signal peptide. The cysteines at positions 32 and 50 are disulfide-linked. Asn55 and Asn71 each carry an N-linked (GlcNAc...) asparagine glycan. Residues 64–212 (DGLTNAGNTT…AFQVDGGMVE (149 aa)) form the Cupin type-1 domain. Residues His112, His114, Glu119, and His158 each coordinate Mn(2+). Asn165 carries an N-linked (GlcNAc...) asparagine glycan.

This sequence belongs to the germin family. In terms of assembly, oligomer (believed to be a pentamer but probably hexamer).

The protein resides in the secreted. It localises to the extracellular space. It is found in the apoplast. In terms of biological role, may play a role in plant defense. Probably has no oxalate oxidase activity even if the active site is conserved. The sequence is that of Putative germin-like protein 3-2 from Oryza sativa subsp. japonica (Rice).